The chain runs to 384 residues: Alanine racemase (384 aa).

The active-site Proton acceptor; specific for D-alanine is lysine 42. Residue lysine 42 is modified to N6-(pyridoxal phosphate)lysine. Arginine 140 provides a ligand contact to substrate. Residue tyrosine 271 is the Proton acceptor; specific for L-alanine of the active site. Methionine 319 serves as a coordination point for substrate.

The protein belongs to the alanine racemase family. In terms of assembly, homodimer. It depends on pyridoxal 5'-phosphate as a cofactor.

It carries out the reaction L-alanine = D-alanine. It functions in the pathway amino-acid biosynthesis; D-alanine biosynthesis; D-alanine from L-alanine: step 1/1. In terms of biological role, catalyzes the interconversion of L-alanine and D-alanine. The protein is Alanine racemase (alr) of Mycobacterium tuberculosis (strain CDC 1551 / Oshkosh).